The sequence spans 331 residues: Junctional sarcoplasmic reticulum protein 1 (331 aa).

Disordered regions lie at residues 1–118 (MSMT…EELP) and 157–331 (RVPE…KGRD). A mediates interaction with CACNA1S region spans residues 3–76 (MTTRAWEELD…EKEPAARGTP (74 aa)). Composition is skewed to basic and acidic residues over residues 21–35 (LEDH…EDRA) and 61–71 (TRPKKMEKEPA). Composition is skewed to pro residues over residues 103–112 (PLQPPPPPPA) and 161–175 (PWVP…PSSP). Basic and acidic residues-rich tracts occupy residues 222–242 (AVRE…PRRE) and 250–302 (PRKE…EPRK). Residues 320 to 331 (SRQKLRAGKGRD) are compositionally biased toward basic residues.

In terms of assembly, interacts with CACNA1S, CACNB1 and calsequestrin.

It localises to the sarcoplasmic reticulum membrane. Its subcellular location is the endoplasmic reticulum membrane. Functionally, involved in skeletal muscle excitation/contraction coupling (EC), probably acting as a regulator of the voltage-sensitive calcium channel CACNA1S. EC is a physiological process whereby an electrical signal (depolarization of the plasma membrane) is converted into a chemical signal, a calcium gradient, by the opening of ryanodine receptor calcium release channels. May regulate CACNA1S membrane targeting and activity. The protein is Junctional sarcoplasmic reticulum protein 1 (JSRP1) of Homo sapiens (Human).